The following is a 602-amino-acid chain: Sulfite reductase [NADPH] hemoprotein beta-component (602 aa).

The segment at 1–23 is disordered; that stretch reads MDDTKTASPAPARAYETPPAERP. Positions 458, 464, 503, and 507 each coordinate [4Fe-4S] cluster. A siroheme-binding site is contributed by C507.

The protein belongs to the nitrite and sulfite reductase 4Fe-4S domain family. As to quaternary structure, alpha(8)-beta(8). The alpha component is a flavoprotein, the beta component is a hemoprotein. The cofactor is siroheme. It depends on [4Fe-4S] cluster as a cofactor.

It carries out the reaction hydrogen sulfide + 3 NADP(+) + 3 H2O = sulfite + 3 NADPH + 4 H(+). Its pathway is sulfur metabolism; hydrogen sulfide biosynthesis; hydrogen sulfide from sulfite (NADPH route): step 1/1. Component of the sulfite reductase complex that catalyzes the 6-electron reduction of sulfite to sulfide. This is one of several activities required for the biosynthesis of L-cysteine from sulfate. The sequence is that of Sulfite reductase [NADPH] hemoprotein beta-component from Methylobacterium sp. (strain 4-46).